Consider the following 73-residue polypeptide: Translation initiation factor IF-1 (73 aa).

In terms of domain architecture, S1-like spans Met-1–Lys-73.

This sequence belongs to the IF-1 family. Component of the 30S ribosomal translation pre-initiation complex which assembles on the 30S ribosome in the order IF-2 and IF-3, IF-1 and N-formylmethionyl-tRNA(fMet); mRNA recruitment can occur at any time during PIC assembly.

The protein resides in the cytoplasm. In terms of biological role, one of the essential components for the initiation of protein synthesis. Stabilizes the binding of IF-2 and IF-3 on the 30S subunit to which N-formylmethionyl-tRNA(fMet) subsequently binds. Helps modulate mRNA selection, yielding the 30S pre-initiation complex (PIC). Upon addition of the 50S ribosomal subunit IF-1, IF-2 and IF-3 are released leaving the mature 70S translation initiation complex. The sequence is that of Translation initiation factor IF-1 from Paenarthrobacter aurescens (strain TC1).